The chain runs to 331 residues: Phosphate acyltransferase (331 aa).

Belongs to the PlsX family. Homodimer. Probably interacts with PlsY.

The protein localises to the cytoplasm. It carries out the reaction a fatty acyl-[ACP] + phosphate = an acyl phosphate + holo-[ACP]. Its pathway is lipid metabolism; phospholipid metabolism. Functionally, catalyzes the reversible formation of acyl-phosphate (acyl-PO(4)) from acyl-[acyl-carrier-protein] (acyl-ACP). This enzyme utilizes acyl-ACP as fatty acyl donor, but not acyl-CoA. The sequence is that of Phosphate acyltransferase from Wolinella succinogenes (strain ATCC 29543 / DSM 1740 / CCUG 13145 / JCM 31913 / LMG 7466 / NCTC 11488 / FDC 602W) (Vibrio succinogenes).